Consider the following 319-residue polypeptide: Ribosomal RNA large subunit methyltransferase F (319 aa).

Residues M1–N25 form a disordered region. Polar residues predominate over residues A7–G16.

It belongs to the methyltransferase superfamily. METTL16/RlmF family.

It localises to the cytoplasm. The catalysed reaction is adenosine(1618) in 23S rRNA + S-adenosyl-L-methionine = N(6)-methyladenosine(1618) in 23S rRNA + S-adenosyl-L-homocysteine + H(+). Its function is as follows. Specifically methylates the adenine in position 1618 of 23S rRNA. This chain is Ribosomal RNA large subunit methyltransferase F, found in Shewanella amazonensis (strain ATCC BAA-1098 / SB2B).